Here is a 513-residue protein sequence, read N- to C-terminus: ATP synthase subunit alpha (513 aa).

Residue 170 to 177 coordinates ATP; that stretch reads GDRQTGKT.

This sequence belongs to the ATPase alpha/beta chains family. In terms of assembly, F-type ATPases have 2 components, CF(1) - the catalytic core - and CF(0) - the membrane proton channel. CF(1) has five subunits: alpha(3), beta(3), gamma(1), delta(1), epsilon(1). CF(0) has four main subunits: a(1), b(1), b'(1) and c(9-12).

Its subcellular location is the cell inner membrane. It carries out the reaction ATP + H2O + 4 H(+)(in) = ADP + phosphate + 5 H(+)(out). Functionally, produces ATP from ADP in the presence of a proton gradient across the membrane. The alpha chain is a regulatory subunit. This Gloeobacter violaceus (strain ATCC 29082 / PCC 7421) protein is ATP synthase subunit alpha.